The following is a 116-amino-acid chain: UPF0342 protein BH1149 (116 aa).

The protein belongs to the UPF0342 family.

This Halalkalibacterium halodurans (strain ATCC BAA-125 / DSM 18197 / FERM 7344 / JCM 9153 / C-125) (Bacillus halodurans) protein is UPF0342 protein BH1149.